The chain runs to 515 residues: Thioredoxin domain-containing protein 2 (515 aa).

Residues Met1 to Ser23 form a disordered region. 2 positions are modified to phosphoserine: Ser14 and Ser39. Positions Thr51 to Val390 are disordered. Composition is skewed to polar residues over residues Phe61–Thr75 and Lys85–Thr136. Tandem repeats lie at residues Gln92–Lys106, Gln107–Thr121, His122–Thr136, His137–Ile151, Gln152–Ile166, Gln167–Ile181, Gln182–Ile196, Gln197–Ile211, Gln212–Ile226, Gln227–Val241, Pro242–Val256, Gln257–Val271, Gln272–Ile286, Gln287–Ile301, Gln302–Val316, Gln317–Ile331, Gln332–Ile346, Pro347–Gln362, Ser363–Ile375, Gln376–Val390, and Gln391–Glu405. A 21 X 15 AA approximate tandem repeat of Q-P-K-X-G-D-I-P-K-S-[PS]-E-[KE]-X-I region spans residues Gln92–Glu405. Basic and acidic residues-rich tracts occupy residues His137 to Val293 and Gln302 to Glu358. Ser146 bears the Phosphoserine mark. Positions Ile375 to Lys384 are enriched in polar residues. The Thioredoxin domain occupies Leu398–Lys515. Cys442 and Cys445 are disulfide-bonded.

As to expression, testis-specific. Strongly expressed in the testicular seminiferous tubules, mostly in the round spermatids.

Its subcellular location is the cytoplasm. Probably plays a regulatory role in sperm development. May participate in regulation of fibrous sheath (FS) assembly by supporting the formation of disulfide bonds during sperm tail morphogenesis. May also be required to rectify incorrect disulfide pairing and generate suitable pairs between the FS constituents. Can reduce disulfide bonds in vitro in the presence of NADP and thioredoxin reductase. The polypeptide is Thioredoxin domain-containing protein 2 (Txndc2) (Mus musculus (Mouse)).